The chain runs to 364 residues: MVREEQEEDDNNNNNNGGGERKLLVADETVPSLLDETGLVCVTGGSGFVASWLIMRLLQRGYSVRATVRTNSEGNKKDISYLTELPFASERLQIFTADLNEPESFKPAIEGCKAVFHVAHPMDPNSNETEETVTKRTVQGLMGILKSCLDAKTVKRFFYTSSAVTVFYSGGNGGGGGEVDESVWSDVEVFRNQKEKRVSSSYVVSKMAAETAALEFGGKNGLEVVTLVIPLVVGPFISSSLPSSVFISLAMLFGNYKEKYLFDTYNMVHIDDVARAMIFLLEKPVAKGRYICSSVEMKIDEVFEFLSTKFPQFQLPSIDLNKYKVEKRMGLSSKKLKSAGFEFKYGAEEIFSGAIRSCQARGFL.

A compositionally biased stretch (acidic residues) spans 1–11 (MVREEQEEDDN). Residues 1–22 (MVREEQEEDDNNNNNNGGGERK) form a disordered region. Residues 44-49 (GGSGFV), Arg69, 98-99 (DL), Tyr202, Lys206, Val232, and Ser244 contribute to the NADP(+) site. The active-site Proton donor is the Lys206.

It belongs to the NAD(P)-dependent epimerase/dehydratase family. In terms of assembly, monomer. Mainly present in cell elongating-containing tissues. Strongly expressed in roots and flowers, also observed in petioles, stems, leaves and siliques.

The protein localises to the cytoplasm. It participates in plant hormone biosynthesis; brassinosteroid biosynthesis. Element of the brassinosteroid metabolic pathway that regulates typhasterol (TY), castasterone (CS) and brassinolide (BL) levels. Involved in the control of organ elongation. The protein is Protein BRI1-5 ENHANCED 1 of Arabidopsis thaliana (Mouse-ear cress).